A 367-amino-acid chain; its full sequence is Probable peptidoglycan glycosyltransferase FtsW (367 aa).

The Cytoplasmic portion of the chain corresponds to 1–8; the sequence is MRRVEGYD. A helical membrane pass occupies residues 9 to 29; that stretch reads MIVLMMAVILTCFGVVMVYSA. Residues 30 to 49 lie on the Periplasmic side of the membrane; it reads SSVMAAKKFHDGFFFLKRQS. A helical transmembrane segment spans residues 50–70; it reads LYALIGFIGMGVAMHVDYHVW. Over 71–72 the chain is Cytoplasmic; that stretch reads KK. A helical membrane pass occupies residues 73 to 93; that stretch reads WAVPLFLGTFFLLLLVFVPGI. Residues 94–138 are Periplasmic-facing; the sequence is GGTAKGASRWIRLPGFNFQPSELAKVALIMYMAYSLEKRQDKLKQ. The helical transmembrane segment at 139–159 threads the bilayer; that stretch reads FMSGFFPYMLILGVFIAVLLA. The Cytoplasmic portion of the chain corresponds to 160-161; sequence QH. Residues 162 to 182 form a helical membrane-spanning segment; that stretch reads DMGAALTMLAVAIVMLFAAGT. A topological domain (periplasmic) is located at residue lysine 183. The chain crosses the membrane as a helical span at residues 184 to 204; sequence VQYILGMGLVALPGICYLVFT. Topologically, residues 205–225 are cytoplasmic; that stretch reads KAYRMRRITAFLDPWQDPTDA. The helical transmembrane segment at 226–246 threads the bilayer; that stretch reads GFQIIQSWLALGTGGFFGQGL. The Periplasmic portion of the chain corresponds to 247–266; the sequence is GEGKQKLFYLPEAHTDFILS. The chain crosses the membrane as a helical span at residues 267-287; it reads VLGEEMGFIGVVVIASMFLLL. Over 288–304 the chain is Cytoplasmic; sequence VQRSIRVAIAAEDSFGR. The chain crosses the membrane as a helical span at residues 305 to 325; sequence FLAFGIAILLGLEAFVNMAVV. Residues 326–335 are Periplasmic-facing; it reads TGLLPTKGIA. A helical membrane pass occupies residues 336-356; sequence LPFLSYGGSSLIISLCSVGVL. The Cytoplasmic portion of the chain corresponds to 357 to 367; it reads LNVSTRMRGAA.

This sequence belongs to the SEDS family. FtsW subfamily.

The protein resides in the cell inner membrane. The enzyme catalyses [GlcNAc-(1-&gt;4)-Mur2Ac(oyl-L-Ala-gamma-D-Glu-L-Lys-D-Ala-D-Ala)](n)-di-trans,octa-cis-undecaprenyl diphosphate + beta-D-GlcNAc-(1-&gt;4)-Mur2Ac(oyl-L-Ala-gamma-D-Glu-L-Lys-D-Ala-D-Ala)-di-trans,octa-cis-undecaprenyl diphosphate = [GlcNAc-(1-&gt;4)-Mur2Ac(oyl-L-Ala-gamma-D-Glu-L-Lys-D-Ala-D-Ala)](n+1)-di-trans,octa-cis-undecaprenyl diphosphate + di-trans,octa-cis-undecaprenyl diphosphate + H(+). It participates in cell wall biogenesis; peptidoglycan biosynthesis. Its function is as follows. Peptidoglycan polymerase that is essential for cell division. This Geobacter sp. (strain M18) protein is Probable peptidoglycan glycosyltransferase FtsW.